A 330-amino-acid polypeptide reads, in one-letter code: Transcriptional regulatory protein PHO23 (330 aa).

The segment at 139–272 (EKIESKSNSK…NSNNSRISRP (134 aa)) is disordered. A compositionally biased stretch (polar residues) spans 231–254 (TAVSPSTISTATAVNNGRIGTSTA). Over residues 255 to 269 (SRGVSSVGNSNNSRI) the composition is skewed to low complexity. The PHD-type zinc finger occupies 280–329 (PLYCYCNQVAYGEMVGCDGADCELEWFHLPCIGLETLPKGKWYCDDCKKK). Zn(2+) contacts are provided by C283, C285, C296, C301, H307, C310, C323, and C326.

This sequence belongs to the ING family. In terms of assembly, interacts with H3K4me3 and to a lesser extent with H3K4me2. Component of the RPD3C(L) complex composed of at least ASH1, CTI6, DEP1, PHO23, RPD3, RXT2, RXT3, SAP30, SDS3, SIN3, UME1 and UME6.

The protein localises to the nucleus. In terms of biological role, component of the RPD3C(L) histone deacetylase complex (HDAC) responsible for the deacetylation of lysine residues on the N-terminal part of the core histones (H2A, H2B, H3 and H4). Histone deacetylation gives a tag for epigenetic repression and plays an important role in transcriptional regulation, cell cycle progression and developmental events. This is Transcriptional regulatory protein PHO23 (PHO23) from Saccharomyces cerevisiae (strain ATCC 204508 / S288c) (Baker's yeast).